The primary structure comprises 110 residues: Bowman-Birk type proteinase inhibitor (110 aa).

Positions 1–19 (MVVLKVCLVLLFLVGGTTS) are cleaved as a signal peptide. Residues 20 to 39 (ANLRLSKLGLLMKSDHQHSN) constitute a propeptide that is removed on maturation. Intrachain disulfides connect cysteine 47–cysteine 101, cysteine 48–cysteine 63, cysteine 51–cysteine 97, cysteine 53–cysteine 61, cysteine 71–cysteine 78, cysteine 75–cysteine 90, and cysteine 80–cysteine 88.

The protein belongs to the Bowman-Birk serine protease inhibitor family.

In terms of biological role, inhibitor of trypsin and of chymotrypsin. The sequence is that of Bowman-Birk type proteinase inhibitor from Glycine max (Soybean).